The following is a 1090-amino-acid chain: MSVYHLPTLLNPLVNAIFNCPEPERSPLKKLFANLKTRRFILLAPPSEYLLNYHDVKSKLPLHDLCYNAEFINSYILLMTENSYINTNSRDSHYETLDGKTVVIQWKNNVIHALNGFHIRRRLKILETKILPNFNDYFEGAADFIILFIDQPLNCEFVPNDYLQCFHNYEKIPKNAHAMPNLSIDSFQQERSSFENILHIHPARLTQLGQLFSSYRTLAPGDDPSRSIFESIVQQAFDGMKSDSLFKNFSNLYDLIHDYFELNLYDDIWSRLTTHFKGHEVDTEKYKYFSVNQLLTDFYSKDYGEFKLHDITLIERRLHLASKHLQKLALTHSYAEKSKILVETLQKLSGTTEMDSHQLELPDGLNNMTMDADTLISLFVLVVCRSEQKHLKSHLYYLQNFSNNSSSTKFGILGYAVSTLEAVVCYFEDFNKNTGNVAKANTLCEKTKNLLDKLSCENPTNEVEDLATYKDILTYRNEQGQSIPSICITNHKNYILLDILSEYENDFPVEDLLEDETIDGSTLLIESIKAGNLEAAKVLIKIMLFNCTEEELVSYINKTDKYARTVAHYLTHEMDILKSIGNYIDWKRKNSSGQTPLFSIFRSYDQPNYEEMVKTAFDIANTWYRKHNSLFDYLDHTDNKGNSLLHVLKTNIPILLQLTKLDINEENYKGLTPLMVYVKYKRLSNIDAITKDRRLILEKVQNSTFFTCFDYAKDHSVLSKIGERGVKDSLFGLIYFHSLRYHNLNATTNITSVSNAEKPFATTVINMKTIQGLLRSILKDNPFTFLPLNTYIDEISHLNRSDLTIIGKTDVTSLLHQLTNCFNVLLFLKKIPENLFTDEASILYWMRINTSKRNQKPSGKENPKTMEPEEINMIQSFLRFNFDEISSFKASLNILRKVLIFINLKSDDFEDAYKGLNEMGRKLINSEASSAFKGIITNHNMFSELSLAELLENVRFLEQCTIQLSSFVQIILFEKIPNWWKHYGEFLALHKSYRKAFPNMVKPKSASDTSSRAPLGGFIETKREQSEQRLAVQIKASSKMLKELGSEIFVAHERLAEELSNYMEFRKACLDQRSLVAFATTNISVLQECV.

A VPS9 domain is found at 289–436 (FSVNQLLTDF…FEDFNKNTGN (148 aa)).

Belongs to the UPF0507 family.

This is UPF0507 protein C1Q_01007 from Saccharomyces cerevisiae (strain JAY291) (Baker's yeast).